The following is a 185-amino-acid chain: Putative sulfur carrier protein YrkF (185 aa).

The Cysteine persulfide intermediate role is filled by Cys15. The Rhodanese domain maps to 101–185 (SDESLNILDV…GMRDWTGKTE (85 aa)).

The protein belongs to the sulfur carrier protein TusA family.

This Bacillus subtilis (strain 168) protein is Putative sulfur carrier protein YrkF (yrkF).